A 400-amino-acid polypeptide reads, in one-letter code: Phosphoglycerate kinase (400 aa).

Residues 22–24 (DFN), R38, 61–64 (HLGR), R119, and R152 each bind substrate. ATP is bound by residues K205, G296, E327, and 353 to 356 (GGDT).

It belongs to the phosphoglycerate kinase family. Monomer.

It is found in the cytoplasm. It catalyses the reaction (2R)-3-phosphoglycerate + ATP = (2R)-3-phospho-glyceroyl phosphate + ADP. The protein operates within carbohydrate degradation; glycolysis; pyruvate from D-glyceraldehyde 3-phosphate: step 2/5. In Campylobacter jejuni subsp. jejuni serotype O:6 (strain 81116 / NCTC 11828), this protein is Phosphoglycerate kinase.